Here is a 241-residue protein sequence, read N- to C-terminus: 1-(5-phosphoribosyl)-5-[(5-phosphoribosylamino)methylideneamino] imidazole-4-carboxamide isomerase (241 aa).

D8 acts as the Proton acceptor in catalysis. D130 serves as the catalytic Proton donor.

Belongs to the HisA/HisF family.

It localises to the cytoplasm. The enzyme catalyses 1-(5-phospho-beta-D-ribosyl)-5-[(5-phospho-beta-D-ribosylamino)methylideneamino]imidazole-4-carboxamide = 5-[(5-phospho-1-deoxy-D-ribulos-1-ylimino)methylamino]-1-(5-phospho-beta-D-ribosyl)imidazole-4-carboxamide. It participates in amino-acid biosynthesis; L-histidine biosynthesis; L-histidine from 5-phospho-alpha-D-ribose 1-diphosphate: step 4/9. In Francisella philomiragia subsp. philomiragia (strain ATCC 25017 / CCUG 19701 / FSC 153 / O#319-036), this protein is 1-(5-phosphoribosyl)-5-[(5-phosphoribosylamino)methylideneamino] imidazole-4-carboxamide isomerase.